A 542-amino-acid polypeptide reads, in one-letter code: Bifunctional pantoate ligase/cytidylate kinase (542 aa).

Residues 1–280 form a pantoate--beta-alanine ligase region; it reads MHWLRTVAAL…VGQTRLIDNL (280 aa). 28–35 is an ATP binding site; the sequence is MGSLHEGH. The Proton donor role is filled by histidine 35. Glutamine 59 is a (R)-pantoate binding site. Beta-alanine is bound at residue glutamine 59. 150 to 153 is a binding site for ATP; the sequence is GQKD. Position 156 (glutamine 156) interacts with (R)-pantoate. ATP is bound by residues valine 179 and 187–190; that span reads CSSR. The cytidylate kinase stretch occupies residues 281-542; it reads LLSPEQGDPL…ERSGPARLDQ (262 aa). A disordered region spans residues 287–311; it reads GDPLPERVQHAAPPSSGTTSPPRRP.

The protein in the N-terminal section; belongs to the pantothenate synthetase family. This sequence in the C-terminal section; belongs to the cytidylate kinase family. Type 1 subfamily.

It localises to the cytoplasm. It catalyses the reaction (R)-pantoate + beta-alanine + ATP = (R)-pantothenate + AMP + diphosphate + H(+). The catalysed reaction is CMP + ATP = CDP + ADP. It carries out the reaction dCMP + ATP = dCDP + ADP. The protein operates within cofactor biosynthesis; (R)-pantothenate biosynthesis; (R)-pantothenate from (R)-pantoate and beta-alanine: step 1/1. Its function is as follows. Catalyzes the condensation of pantoate with beta-alanine in an ATP-dependent reaction via a pantoyl-adenylate intermediate. Functionally, catalyzes the transfer of a phosphate group from ATP to either CMP or dCMP to form CDP or dCDP and ADP, respectively. This is Bifunctional pantoate ligase/cytidylate kinase from Synechococcus sp. (strain JA-2-3B'a(2-13)) (Cyanobacteria bacterium Yellowstone B-Prime).